The following is a 373-amino-acid chain: Glutamate 5-kinase (373 aa).

Position 15 (Lys15) interacts with ATP. Residues Ser54, Asp141, and Asn153 each coordinate substrate. Residues 173-174 and 215-221 each bind ATP; these read SD and TGGMATK. In terms of domain architecture, PUA spans 280–358; sequence RGKLLVDEGA…SEIEVVLGYK (79 aa).

This sequence belongs to the glutamate 5-kinase family.

It localises to the cytoplasm. The enzyme catalyses L-glutamate + ATP = L-glutamyl 5-phosphate + ADP. Its pathway is amino-acid biosynthesis; L-proline biosynthesis; L-glutamate 5-semialdehyde from L-glutamate: step 1/2. Its function is as follows. Catalyzes the transfer of a phosphate group to glutamate to form L-glutamate 5-phosphate. This is Glutamate 5-kinase from Syntrophotalea carbinolica (strain DSM 2380 / NBRC 103641 / GraBd1) (Pelobacter carbinolicus).